Reading from the N-terminus, the 158-residue chain is WYSSMFAANIKQEPISHHNHHHHHHHGHHQHQQRHNSNSNASSPHQSPLPNLQLEQYLKQQQQQPLMPPGLPNPMQTIMPANMRPSPTARTTTTTAAAAPTTTAAAIAMQANDKLQALTPPMDVTPPKSPAKTQQSCAEPEKEHDLMSNSSEDMKYMA.

Residues 18–34 are compositionally biased toward basic residues; sequence HNHHHHHHHGHHQHQQR. Disordered stretches follow at residues 18-96 and 118-158; these read HNHH…TTTA and LTPP…KYMA. The span at 41–50 shows a compositional bias: polar residues; sequence ASSPHQSPLP. Low complexity predominate over residues 52–65; it reads LQLEQYLKQQQQQP. The span at 139–158 shows a compositional bias: basic and acidic residues; sequence EPEKEHDLMSNSSEDMKYMA.

Belongs to the hunchback C2H2-type zinc-finger protein family.

It is found in the nucleus. Functionally, gap class segmentation protein that controls development of head structures. This chain is Protein hunchback (hb), found in Drosophila mimica (Fruit fly).